Here is a 163-residue protein sequence, read N- to C-terminus: Lysosomal enzyme trafficking factor (163 aa).

Helical transmembrane passes span 40–60 and 98–118; these read MGWIGVGLYLLASAAAFYYVF and LPFWVWTVIFLVPYLQMFLFL.

This sequence belongs to the LYSET family. Interacts with GNPTAB; this interaction is important for proper localization of GNPTAB in Golgi stacks. Interacts with MBTPS1.

It localises to the golgi apparatus membrane. Functionally, required for mannose-6-phosphate-dependent trafficking of lysosomal enzymes. LYSET bridges GlcNAc-1-phosphate transferase (GNPTAB), to the membrane-bound transcription factor site-1 protease (MBTPS1), thus allowing proteolytic activation of the GNPTAB. GNPTAB is involved in the regulation of M6P-dependent Golgi-to-lysosome trafficking of lysosomal enzymes. LYSET is thus an essential factor for maturation and delivery of lysosomal hydrolases. In terms of biological role, (Microbial infection) Essential for infection by muliple viruses, including SARS-CoV-2, that utilize activated cathepsins for entry after M6P-dependent lysosomal transport. The polypeptide is Lysosomal enzyme trafficking factor (Homo sapiens (Human)).